A 173-amino-acid chain; its full sequence is uncharacterized protein (173 aa).

The next 4 helical transmembrane spans lie at 9 to 29 (FSICICQIFIIYFIFFLLLCV), 32 to 52 (ICSALSNGFNFLIIYGGTFFH), 100 to 120 (MFLCFFSSIVFASAFVFSFIV), and 127 to 147 (FLFLSLNSGFSFTGYITGLYP).

Its subcellular location is the membrane. This is an uncharacterized protein from Saccharomyces cerevisiae (strain ATCC 204508 / S288c) (Baker's yeast).